Reading from the N-terminus, the 451-residue chain is UDP-N-acetylmuramoylalanine--D-glutamate ligase (451 aa).

118-124 (GTKGKST) contributes to the ATP binding site.

It belongs to the MurCDEF family.

It localises to the cytoplasm. The catalysed reaction is UDP-N-acetyl-alpha-D-muramoyl-L-alanine + D-glutamate + ATP = UDP-N-acetyl-alpha-D-muramoyl-L-alanyl-D-glutamate + ADP + phosphate + H(+). It participates in cell wall biogenesis; peptidoglycan biosynthesis. Functionally, cell wall formation. Catalyzes the addition of glutamate to the nucleotide precursor UDP-N-acetylmuramoyl-L-alanine (UMA). This Borreliella afzelii (strain PKo) (Borrelia afzelii) protein is UDP-N-acetylmuramoylalanine--D-glutamate ligase.